The following is a 511-amino-acid chain: Myrosinase 5 (511 aa).

The first 23 residues, 1–23, serve as a signal peptide directing secretion; that stretch reads MAIPKAHYSLAVLVLLFVVVSSS. 3 disulfides stabilise this stretch: Cys31-Cys450, Cys39-Cys445, and Cys230-Cys233. Residues Asn46 and Asn53 are each glycosylated (N-linked (GlcNAc...) asparagine). A beta-D-glucoside-binding positions include Gln64, His165, and 210–211; that span reads NQ. Asn222 carries N-linked (GlcNAc...) asparagine glycosylation. A beta-D-glucoside is bound by residues Tyr351 and Glu418. Residue Glu418 is the Nucleophile of the active site. The N-linked (GlcNAc...) asparagine glycan is linked to Asn428. A beta-D-glucoside is bound by residues Trp467, 474–475, and Phe483; that span reads EF. A glycan (N-linked (GlcNAc...) asparagine) is linked at Asn489.

This sequence belongs to the glycosyl hydrolase 1 family. In terms of tissue distribution, specifically expressed in roots.

It catalyses the reaction a thioglucoside + H2O = a sugar + a thiol.. It carries out the reaction Hydrolysis of terminal, non-reducing beta-D-glucosyl residues with release of beta-D-glucose.. Hydrolyzes sinigrin and, with lower efficiency, p-nitrophenyl beta-D-glucoside. The sequence is that of Myrosinase 5 from Arabidopsis thaliana (Mouse-ear cress).